A 72-amino-acid polypeptide reads, in one-letter code: Large ribosomal subunit protein bL31 (72 aa).

Zn(2+)-binding residues include Cys-16, Cys-18, Cys-38, and Cys-41.

It belongs to the bacterial ribosomal protein bL31 family. Type A subfamily. In terms of assembly, part of the 50S ribosomal subunit. Zn(2+) is required as a cofactor.

Functionally, binds the 23S rRNA. The sequence is that of Large ribosomal subunit protein bL31 from Aromatoleum aromaticum (strain DSM 19018 / LMG 30748 / EbN1) (Azoarcus sp. (strain EbN1)).